The following is a 786-amino-acid chain: Elastin (786 aa).

A signal peptide spans 1-26; that stretch reads MAGLTAAAPRPGVLLLLLSILHPSRP. Proline 34 carries the hydroxyproline modification. Proline 65, proline 67, and proline 88 each carry hydroxyproline; partial. Allysine occurs at positions 104 and 107. Proline 116 bears the 4-hydroxyproline; partial mark. Hydroxyproline; partial occurs at positions 156, 167, 170, and 177. 4-hydroxyproline; partial is present on proline 190. Lysine 241, lysine 261, and lysine 265 each carry allysine. Proline 283 and proline 286 each carry 4-hydroxyproline; partial. At proline 290 the chain carries Hydroxyproline; partial. Allysine occurs at positions 312 and 315. Proline 327, proline 342, and proline 347 each carry 4-hydroxyproline; partial. 2 positions are modified to hydroxyproline; partial: proline 352 and proline 355. Proline 360 bears the 4-hydroxyproline; partial mark. 3 positions are modified to allysine: lysine 375, lysine 379, and lysine 382. Proline 415 is subject to 4-hydroxyproline; partial. Proline 421 is subject to Hydroxyproline; partial. The residue at position 427 (proline 427) is a 4-hydroxyproline; partial. Allysine occurs at positions 448 and 451. A Hydroxyproline; partial modification is found at proline 465. A 4-hydroxyproline; partial modification is found at proline 481. Residues lysine 492 and lysine 496 each carry the allysine modification. Residues proline 522 and proline 550 each carry the hydroxyproline; partial modification. Allysine is present on residues lysine 558, lysine 562, and lysine 566. Proline 580 is modified (4-hydroxyproline; partial). 4-hydroxyproline occurs at positions 589 and 598. Proline 607 is subject to 4-hydroxyproline; partial. The disordered stretch occupies residues 615–645; that stretch reads EGVRRSLSPELREGDPSSSQHLPSTPSSPRV. The span at 630 to 645 shows a compositional bias: low complexity; that stretch reads PSSSQHLPSTPSSPRV. A Hydroxyproline; partial modification is found at proline 646. Residues lysine 653 and lysine 656 each carry the allysine modification. 4-hydroxyproline; partial is present on proline 677. An allysine mark is found at lysine 693, lysine 697, lysine 735, and lysine 738. Proline 769 and proline 772 each carry hydroxyproline; partial. A disulfide bond links cysteine 776 and cysteine 781.

This sequence belongs to the elastin family. The polymeric elastin chains are cross-linked together into an extensible 3D network. Forms a ternary complex with BGN and MFAP2. Interacts with MFAP2 via divalent cations (calcium &gt; magnesium &gt; manganese) in a dose-dependent and saturating manner. Interacts with FBLN5. Interacts with FBN1. Forms a ternary complex with FBN1 and FBLN2 or FBLN5. Interacts with MFAP4 in a Ca (2+)-dependent manner; this interaction promotes ELN self-assembly. Interacts with EFEMP2 with moderate affinity. In terms of processing, elastin is formed through the cross-linking of its soluble precursor tropoelastin. Cross-linking is initiated through the action of lysyl oxidase on exposed lysines to form allysine. Subsequent spontaneous condensation reactions with other allysine or unmodified lysine residues result in various bi-, tri-, and tetrafunctional cross-links. The most abundant cross-links in mature elastin fibers are lysinonorleucine, allysine aldol, desmosine, and isodesmosine. Post-translationally, hydroxylation on proline residues within the sequence motif, GXPG, is most likely 4-hydroxy as this fits the requirement for 4-hydroxylation in vertebrates. Expressed within the outer myometrial smooth muscle and throughout the arteriolar tree of uterus (at protein level). Also expressed in the large arteries, lung and skin.

The protein resides in the secreted. It localises to the extracellular space. Its subcellular location is the extracellular matrix. In terms of biological role, major structural protein of tissues such as aorta and nuchal ligament, which must expand rapidly and recover completely. Molecular determinant of the late arterial morphogenesis, stabilizing arterial structure by regulating proliferation and organization of vascular smooth muscle. The protein is Elastin (ELN) of Homo sapiens (Human).